Consider the following 84-residue polypeptide: Large ribosomal subunit protein bL31B (84 aa).

It belongs to the bacterial ribosomal protein bL31 family. Type B subfamily. Part of the 50S ribosomal subunit.

Binds the 23S rRNA. The chain is Large ribosomal subunit protein bL31B from Rhodococcus jostii (strain RHA1).